A 205-amino-acid polypeptide reads, in one-letter code: Small ribosomal subunit protein uS4 (205 aa).

The segment at 21–47 (GRPKSPFNKRDYGPGQHGQGRKGKPSD) is disordered. The S4 RNA-binding domain occupies 94-154 (RRLDSVVYRA…DKSKQLAIID (61 aa)).

It belongs to the universal ribosomal protein uS4 family. As to quaternary structure, part of the 30S ribosomal subunit. Contacts protein S5. The interaction surface between S4 and S5 is involved in control of translational fidelity.

One of the primary rRNA binding proteins, it binds directly to 16S rRNA where it nucleates assembly of the body of the 30S subunit. Functionally, with S5 and S12 plays an important role in translational accuracy. The protein is Small ribosomal subunit protein uS4 of Pelagibacter ubique (strain HTCC1062).